A 146-amino-acid polypeptide reads, in one-letter code: VQWTAEEKQLITGLWGKVNVAECGGEALARLLIVYPWTQRFFASFGNLSSPTAVLGNPKVQAHGKKVLTSFGEAVKNLDSIKNTFSQLSELHCDKLHVDPENFRLLGDILVVVLAAHFGKDFTPDCQAAWQKLVRVVAHALARKYH.

The Globin domain occupies 2–146 (QWTAEEKQLI…VAHALARKYH (145 aa)). The heme b site is built by His63 and His92.

This sequence belongs to the globin family. In terms of assembly, heterotetramer of two alpha chains and two beta chains. As to expression, red blood cells.

Functionally, involved in oxygen transport from the lung to the various peripheral tissues. The protein is Hemoglobin subunit beta (HBB) of Passer montanus (Eurasian tree sparrow).